The following is a 118-amino-acid chain: Large ribosomal subunit protein bL19 (118 aa).

It belongs to the bacterial ribosomal protein bL19 family.

This protein is located at the 30S-50S ribosomal subunit interface and may play a role in the structure and function of the aminoacyl-tRNA binding site. The polypeptide is Large ribosomal subunit protein bL19 (Helicobacter pylori (strain HPAG1)).